A 206-amino-acid polypeptide reads, in one-letter code: Ras-related protein Rab7 (206 aa).

Residues 15–22 (GDSGVGKT), 63–67 (DTAGQ), and 125–128 (NKID) each bind GTP. 2 S-geranylgeranyl cysteine lipidation sites follow: Cys-204 and Cys-206. The residue at position 206 (Cys-206) is a Cysteine methyl ester.

Belongs to the small GTPase superfamily. Rab family.

It is found in the cell membrane. Its function is as follows. Protein transport. Probably involved in vesicular traffic. The protein is Ras-related protein Rab7 of Pisum sativum (Garden pea).